A 51-amino-acid polypeptide reads, in one-letter code: MARNKPLGKKLRLGAALKSNRNPPVWVVAKTKRRVTRSPTRRHWRRVKLKA.

The segment at 32–51 (KRRVTRSPTRRHWRRVKLKA) is disordered.

Belongs to the eukaryotic ribosomal protein eL39 family.

The chain is Large ribosomal subunit protein eL39 from Pyrobaculum arsenaticum (strain DSM 13514 / JCM 11321 / PZ6).